The primary structure comprises 200 residues: Probable GTP-binding protein EngB (200 aa).

An EngB-type G domain is found at 22–197 (DLPEIAFAGR…WQAIQDAVEE (176 aa)). Residues 30-37 (GRSNVGKS), 57-61 (GRTQL), 78-81 (DLPG), 145-148 (TKCD), and 176-178 (FSA) each bind GTP. Positions 37 and 59 each coordinate Mg(2+).

It belongs to the TRAFAC class TrmE-Era-EngA-EngB-Septin-like GTPase superfamily. EngB GTPase family. It depends on Mg(2+) as a cofactor.

Its function is as follows. Necessary for normal cell division and for the maintenance of normal septation. The sequence is that of Probable GTP-binding protein EngB from Trichlorobacter lovleyi (strain ATCC BAA-1151 / DSM 17278 / SZ) (Geobacter lovleyi).